Reading from the N-terminus, the 311-residue chain is Methionyl-tRNA formyltransferase (311 aa).

112 to 115 (SLLP) serves as a coordination point for (6S)-5,6,7,8-tetrahydrofolate.

This sequence belongs to the Fmt family.

It carries out the reaction L-methionyl-tRNA(fMet) + (6R)-10-formyltetrahydrofolate = N-formyl-L-methionyl-tRNA(fMet) + (6S)-5,6,7,8-tetrahydrofolate + H(+). Functionally, attaches a formyl group to the free amino group of methionyl-tRNA(fMet). The formyl group appears to play a dual role in the initiator identity of N-formylmethionyl-tRNA by promoting its recognition by IF2 and preventing the misappropriation of this tRNA by the elongation apparatus. The sequence is that of Methionyl-tRNA formyltransferase from Chelativorans sp. (strain BNC1).